Reading from the N-terminus, the 1314-residue chain is Condensin-2 complex subunit CAP-D3 (1314 aa).

10 HEAT repeats span residues Glu20–Arg58, Pro98–Gly136, Lys184–Asn222, Thr231–Lys267, Asn269–Val310, Arg331–Asp360, Ser361–Gly398, Ser417–Gly455, Phe457–Asp493, and Glu494–Leu532. Residues Asp116–Thr150 form a disordered region. A compositionally biased stretch (basic residues) spans Gly130–Arg140. The Nuclear localization signal motif lies at Ser789–Asp796. HEAT repeat units follow at residues Ser821–Ala859, Gly878–Thr916, Ala917–Val954, Trp956–Pro992, Gln1053–Gln1091, and Lys1138–Asn1179. Disordered stretches follow at residues Met1210–Arg1237 and Val1265–Ser1314.

Component of the condensin-2 complex. Present in buds.

It localises to the nucleus. It is found in the chromosome. Functionally, regulatory subunit of the condensin-2 complex, a complex which establishes mitotic chromosome architecture and is involved in physical rigidity of the chromatid axis. May promote the resolution of double-strand DNA catenanes (intertwines) between sister chromatids. Required for plant vigor, fertility, chromatin condensation and sister chromatid cohesion both during mitosis and meiosis. Necessary to maintain normal structural integrity of the meiotic chromosomes during the two nuclear divisions of gametogenesis, especially to prevent interchromosome connections at metaphase I. Seems also involved in crossover formation during meiotic prophase I. Prevents centromeric and pericentromeric heterochromatin repeats association. The protein is Condensin-2 complex subunit CAP-D3 of Arabidopsis thaliana (Mouse-ear cress).